Here is a 227-residue protein sequence, read N- to C-terminus: ATP-dependent dethiobiotin synthetase BioD (227 aa).

13–18 (DIGKTY) contacts ATP. Thr17 provides a ligand contact to Mg(2+). Residue Lys38 is part of the active site. Residue Ser42 participates in substrate binding. ATP is bound by residues Asp55, 116–119 (EGSG), and 179–180 (NN). Mg(2+)-binding residues include Asp55 and Glu116.

This sequence belongs to the dethiobiotin synthetase family. Homodimer. Requires Mg(2+) as cofactor.

The protein localises to the cytoplasm. The catalysed reaction is (7R,8S)-7,8-diammoniononanoate + CO2 + ATP = (4R,5S)-dethiobiotin + ADP + phosphate + 3 H(+). It functions in the pathway cofactor biosynthesis; biotin biosynthesis; biotin from 7,8-diaminononanoate: step 1/2. Its function is as follows. Catalyzes a mechanistically unusual reaction, the ATP-dependent insertion of CO2 between the N7 and N8 nitrogen atoms of 7,8-diaminopelargonic acid (DAPA, also called 7,8-diammoniononanoate) to form a ureido ring. The chain is ATP-dependent dethiobiotin synthetase BioD from Clostridium botulinum (strain Kyoto / Type A2).